Here is a 386-residue protein sequence, read N- to C-terminus: DNA-directed RNA polymerase subunit Rpo1C (386 aa).

It belongs to the RNA polymerase beta' chain family. Part of the RNA polymerase complex.

The protein localises to the cytoplasm. It catalyses the reaction RNA(n) + a ribonucleoside 5'-triphosphate = RNA(n+1) + diphosphate. In terms of biological role, DNA-dependent RNA polymerase (RNAP) catalyzes the transcription of DNA into RNA using the four ribonucleoside triphosphates as substrates. Forms part of the jaw domain. This Methanococcus maripaludis (strain C5 / ATCC BAA-1333) protein is DNA-directed RNA polymerase subunit Rpo1C.